A 498-amino-acid polypeptide reads, in one-letter code: Glycylpeptide N-tetradecanoyltransferase 2 (498 aa).

Residues 1 to 88 (MAEDSESAAS…QPSKNPSVPM (88 aa)) are disordered. Acidic residues predominate over residues 15–32 (ELDDQDTCGIDGDNEEET). Serine 38 carries the post-translational modification Phosphoserine. Positions 45–57 (AKKKKKKQKRKKE) are enriched in basic residues. Residues 61–86 (SGGTKSDSASDSQEIKIQQPSKNPSV) show a composition bias toward polar residues. Residues histidine 117, tryptophan 122, leucine 250, valine 252, serine 258, arginine 260, valine 261, and alanine 262 each contribute to the tetradecanoyl-CoA site.

The protein belongs to the NMT family.

It localises to the cytoplasm. The protein resides in the membrane. It carries out the reaction N-terminal glycyl-[protein] + tetradecanoyl-CoA = N-tetradecanoylglycyl-[protein] + CoA + H(+). It catalyses the reaction N-terminal glycyl-L-lysyl-[protein] + tetradecanoyl-CoA = N-terminal glycyl-(N(6)-tetradecanoyl)-L-lysyl-[protein] + CoA + H(+). Adds a myristoyl group to the N-terminal glycine residue of certain cellular and viral proteins. Also able to mediate N-terminal lysine myristoylation of proteins: catalyzes myristoylation of ARF6 on both 'Gly-2' and 'Lys-3'. Lysine myristoylation is required to maintain ARF6 on membranes during the GTPase cycle. The protein is Glycylpeptide N-tetradecanoyltransferase 2 of Homo sapiens (Human).